The primary structure comprises 342 residues: Gibberellin cluster GA4 desaturase (342 aa).

A disordered region spans residues 127 to 183 (PELAPPYPMPGKSSSGSKEREAIPANELPTTRAKGFQKGEEEGPVRKPHKDWGPSGA).

It belongs to the asaB hydroxylase/desaturase family.

The protein operates within plant hormone biosynthesis; gibberellin biosynthesis. Functionally, GA4 desaturase; part of the gene cluster that mediates the biosynthesis of gibberellins (GAs), diterpenoids that may provide a selective advantage during infection of the preferred host plant, rice. Gibberellins (GAs) are diterpenoids and are synthesized via the mevalonate pathway. Biosynthesis of the major metabolite GA3 (gibberellic acid) from geranylgeranyl diphosphate (GGPP) requires 13 steps. The GGPP produced by the geranylgeranyl diphosphate synthase GGS2 is converted to ent-kaurene via ent-copalyldiphosphate in a two-step cyclization reaction performed by the bifunctional ent-copalyl diphosphate synthase/ent-kaurene synthase enzyme (CPS/KS). Ent-Kaurene is metabolized to GAs by a series of oxidation reactions catalyzed by cytochrome P450 monooxygenases. Cytochrome P450 monooxygenase P450-4 is an ent-kaurene oxidase that catalyzes the three oxidation steps between ent-kaurene and ent-kaurenoic acid. The highly multifunctional cytochrome P450 monooxygenase P450-1 then catalyzes four steps involving oxidation at two carbon atoms, in the main pathway from ent-kaurenoic acid to GA14 via GA12-aldehyde as well as producing kaurenolides and fujenoic acids as by-products. The cytochrome P450 monooxygenase P450-2 then converts GA14 to GA4 by removal of C-20. GA4 is further converted to GA7 by the GA4 desaturase DES via 1,2-desaturation before cytochrome P450 monooxygenase P450-3, a 13-hydroxylase, hydroxylates GA7 to GA3, the final product of the GA-biosynthetic pathway. This chain is Gibberellin cluster GA4 desaturase, found in Gibberella fujikuroi (strain CBS 195.34 / IMI 58289 / NRRL A-6831) (Bakanae and foot rot disease fungus).